We begin with the raw amino-acid sequence, 574 residues long: Septation ring formation regulator EzrA (574 aa).

The Extracellular segment spans residues 1–7 (MSSGIIL). The helical transmembrane segment at 8–26 (LIVAIVLLVIIAYLVGVII) threads the bilayer. The Cytoplasmic segment spans residues 27-574 (RKRNDSLITS…YEKTREHIRF (548 aa)). 3 coiled-coil regions span residues 102–141 (NFIR…EEKN), 274–350 (ELVT…ETES), and 459–520 (QLEA…SFEA).

The protein belongs to the EzrA family.

It is found in the cell membrane. In terms of biological role, negative regulator of FtsZ ring formation; modulates the frequency and position of FtsZ ring formation. Inhibits FtsZ ring formation at polar sites. Interacts either with FtsZ or with one of its binding partners to promote depolymerization. This is Septation ring formation regulator EzrA from Streptococcus pyogenes serotype M1.